The chain runs to 456 residues: Bifunctional protein GlmU (456 aa).

The segment at 1-229 (MLNSAMSVVI…ISETDGVNNR (229 aa)) is pyrophosphorylase. Residues 11-14 (LAAG), Lys25, Gln76, 81-82 (GT), 103-105 (YGD), Gly140, Glu154, Asn169, and Asn227 contribute to the UDP-N-acetyl-alpha-D-glucosamine site. Asp105 is a binding site for Mg(2+). Asn227 provides a ligand contact to Mg(2+). A linker region spans residues 230 to 250 (LQLSRLERIYQAEQAEKLLLS). Residues 251–456 (GVMLRDPARF…QGWQRPVKKK (206 aa)) form an N-acetyltransferase region. UDP-N-acetyl-alpha-D-glucosamine-binding residues include Arg333 and Lys351. The active-site Proton acceptor is His363. Tyr366 and Asn377 together coordinate UDP-N-acetyl-alpha-D-glucosamine. Residues Ala380, 386–387 (NY), Ser405, Ala423, and Arg440 each bind acetyl-CoA.

It in the N-terminal section; belongs to the N-acetylglucosamine-1-phosphate uridyltransferase family. The protein in the C-terminal section; belongs to the transferase hexapeptide repeat family. As to quaternary structure, homotrimer. Requires Mg(2+) as cofactor.

It is found in the cytoplasm. It catalyses the reaction alpha-D-glucosamine 1-phosphate + acetyl-CoA = N-acetyl-alpha-D-glucosamine 1-phosphate + CoA + H(+). It carries out the reaction N-acetyl-alpha-D-glucosamine 1-phosphate + UTP + H(+) = UDP-N-acetyl-alpha-D-glucosamine + diphosphate. The protein operates within nucleotide-sugar biosynthesis; UDP-N-acetyl-alpha-D-glucosamine biosynthesis; N-acetyl-alpha-D-glucosamine 1-phosphate from alpha-D-glucosamine 6-phosphate (route II): step 2/2. Its pathway is nucleotide-sugar biosynthesis; UDP-N-acetyl-alpha-D-glucosamine biosynthesis; UDP-N-acetyl-alpha-D-glucosamine from N-acetyl-alpha-D-glucosamine 1-phosphate: step 1/1. It participates in bacterial outer membrane biogenesis; LPS lipid A biosynthesis. In terms of biological role, catalyzes the last two sequential reactions in the de novo biosynthetic pathway for UDP-N-acetylglucosamine (UDP-GlcNAc). The C-terminal domain catalyzes the transfer of acetyl group from acetyl coenzyme A to glucosamine-1-phosphate (GlcN-1-P) to produce N-acetylglucosamine-1-phosphate (GlcNAc-1-P), which is converted into UDP-GlcNAc by the transfer of uridine 5-monophosphate (from uridine 5-triphosphate), a reaction catalyzed by the N-terminal domain. The sequence is that of Bifunctional protein GlmU from Salmonella heidelberg (strain SL476).